A 459-amino-acid chain; its full sequence is Ribulose bisphosphate carboxylase (459 aa).

Asn111 lines the substrate pocket. Lys166 serves as the catalytic Proton acceptor. Position 168 (Lys168) interacts with substrate. Residues Lys191, Asp193, and Glu194 each contribute to the Mg(2+) site. Lys191 carries the N6-carboxylysine modification. The active-site Proton acceptor is the His287. Positions 288, 321, and 368 each coordinate substrate.

Belongs to the RuBisCO large chain family. Type II subfamily. Homodimer. The cofactor is Mg(2+).

The enzyme catalyses 2 (2R)-3-phosphoglycerate + 2 H(+) = D-ribulose 1,5-bisphosphate + CO2 + H2O. The catalysed reaction is D-ribulose 1,5-bisphosphate + O2 = 2-phosphoglycolate + (2R)-3-phosphoglycerate + 2 H(+). In terms of biological role, ruBisCO catalyzes two reactions: the carboxylation of D-ribulose 1,5-bisphosphate, the primary event in carbon dioxide fixation, as well as the oxidative fragmentation of the pentose substrate. Both reactions occur simultaneously and in competition at the same active site. This is Ribulose bisphosphate carboxylase from Dechloromonas aromatica (strain RCB).